Here is a 350-residue protein sequence, read N- to C-terminus: GTPase Obg (350 aa).

Residues M1 to L159 enclose the Obg domain. The segment at N127–G147 is disordered. In terms of domain architecture, OBG-type G spans A160–D337. Residues G166–S173, F191–Y195, D213–G216, N287–D290, and S318–L320 contribute to the GTP site. Residues S173 and T193 each contribute to the Mg(2+) site.

Belongs to the TRAFAC class OBG-HflX-like GTPase superfamily. OBG GTPase family. Monomer. Requires Mg(2+) as cofactor.

Its subcellular location is the cytoplasm. Functionally, an essential GTPase which binds GTP, GDP and possibly (p)ppGpp with moderate affinity, with high nucleotide exchange rates and a fairly low GTP hydrolysis rate. Plays a role in control of the cell cycle, stress response, ribosome biogenesis and in those bacteria that undergo differentiation, in morphogenesis control. The protein is GTPase Obg of Stenotrophomonas maltophilia (strain R551-3).